The following is a 217-amino-acid chain: Oxygen regulatory protein NreC (217 aa).

One can recognise a Response regulatory domain in the interval lysine 2–tyrosine 119. Aspartate 53 is subject to 4-aspartylphosphate. In terms of domain architecture, HTH luxR-type spans threonine 148 to lysine 213. Residues asparagine 172–threonine 191 constitute a DNA-binding region (H-T-H motif).

Phosphorylated by NreB.

The protein resides in the cytoplasm. In terms of biological role, member of the two-component regulatory system NreB/NreC involved in the control of dissimilatory nitrate/nitrite reduction in response to oxygen. Phosphorylated NreC binds to a GC-rich palindromic sequence at the promoters of the nitrate (narGHJI) and nitrite (nir) reductase operons, as well as the putative nitrate transporter gene narT, and activates their expression. This is Oxygen regulatory protein NreC (nreC) from Staphylococcus aureus (strain USA300 / TCH1516).